The sequence spans 184 residues: ATP synthase subunit delta (184 aa).

The protein belongs to the ATPase delta chain family. As to quaternary structure, F-type ATPases have 2 components, F(1) - the catalytic core - and F(0) - the membrane proton channel. F(1) has five subunits: alpha(3), beta(3), gamma(1), delta(1), epsilon(1). CF(0) has four main subunits: a(1), b(1), b'(1) and c(10-14). The alpha and beta chains form an alternating ring which encloses part of the gamma chain. F(1) is attached to F(0) by a central stalk formed by the gamma and epsilon chains, while a peripheral stalk is formed by the delta, b and b' chains.

It is found in the cellular thylakoid membrane. F(1)F(0) ATP synthase produces ATP from ADP in the presence of a proton or sodium gradient. F-type ATPases consist of two structural domains, F(1) containing the extramembraneous catalytic core and F(0) containing the membrane proton channel, linked together by a central stalk and a peripheral stalk. During catalysis, ATP synthesis in the catalytic domain of F(1) is coupled via a rotary mechanism of the central stalk subunits to proton translocation. Functionally, this protein is part of the stalk that links CF(0) to CF(1). It either transmits conformational changes from CF(0) to CF(1) or is implicated in proton conduction. This chain is ATP synthase subunit delta, found in Gloeothece citriformis (strain PCC 7424) (Cyanothece sp. (strain PCC 7424)).